The chain runs to 517 residues: Cytochrome P450 monooxygenase bsc11 (517 aa).

The chain crosses the membrane as a helical span at residues 16 to 33; the sequence is ALPLTCTGLIIIFAFYLS. Asparagine 204 carries N-linked (GlcNAc...) asparagine glycosylation. Cysteine 448 is a binding site for heme.

This sequence belongs to the cytochrome P450 family. The cofactor is heme.

It is found in the membrane. Its pathway is mycotoxin biosynthesis. In terms of biological role, cytochrome P450 monooxygenase; part of the gene cluster that mediates the biosynthesis of the diterpene glucoside brassicicene C. In the first step of the brassicicene C biosynthesis, the bifunctional diterpene synthase bsc8 that possesses both prenyl transferase and terpene cyclase activity, converts isopentenyl diphosphate and dimethylallyl diphosphate into geranylgeranyl diphosphate (GGDP) that is further converted into fusicocca-2,10(14)-diene, the first precursor for brassicicene C. Fusicocca-2,10(14)-diene is then substrate of cytochrome P450 monooxygenase bsc1 for hydroxylation at the C-8 position. Oxidation at C-16 position to aldehyde is then catalyzed by the cytochrome P450 monooyxygenase bsc7, yielding fusicocca-2,10(14)-diene-8-beta,16-diol. Follows the isomerization of the double bond and reduction of aldehyde to alcohol catalyzed by the short-chain dehydrogenase/reductase bsc3 to yield the diol compound fusicocca-1,10(14)-diene-8 beta,16-diol. The next step is the oxidation at the C-3 position of fusicocca-2,10(14)-diene-8-beta,16-diol catalyzed by the alpha-ketoglutarate dependent dioxygenase bsc9, to produce a triol compound. Methylation of the hydroxy group at position 16 is performed by the methyltransferase bsc6. 16-O-methylation is followed by oxidation at the C-13 position to ketone and an alkyl shift of the methyl group leads to brassicicene C. Although the probable acetyltransferase bsc4 is included in the gene cluster, no acetylation reactions are necessary for brassicicene C biosynthesis. However, the fact that brassicicene E, which is a structurally related compound having an acetoxy group at position 12, was previously isolated from another strain of A.brassicicola suggests that the ATCC 96836 strain might also produce a small amount of brassicicene E. This chain is Cytochrome P450 monooxygenase bsc11, found in Alternaria brassicicola (Dark leaf spot agent).